The following is a 477-amino-acid chain: ATP-dependent rRNA helicase RRP3 (477 aa).

A disordered region spans residues Met-1 to Ala-22. A Q motif motif is present at residues Lys-65–Ser-93. Residues Ile-96 to Val-267 enclose the Helicase ATP-binding domain. Residue Ala-109–Thr-116 participates in ATP binding. A DEAD box motif is present at residues Asp-215–Asp-218. Positions Tyr-294–Leu-438 constitute a Helicase C-terminal domain. Residues Ala-452–Arg-477 form a disordered region.

Belongs to the DEAD box helicase family. DDX47/RRP3 subfamily. In terms of assembly, interacts with the SSU processome.

The protein localises to the nucleus. The catalysed reaction is ATP + H2O = ADP + phosphate + H(+). Functionally, ATP-dependent rRNA helicase required for pre-ribosomal RNA processing. Involved in the maturation of the 35S-pre-rRNA and to its cleavage to mature 18S rRNA. The polypeptide is ATP-dependent rRNA helicase RRP3 (Debaryomyces hansenii (strain ATCC 36239 / CBS 767 / BCRC 21394 / JCM 1990 / NBRC 0083 / IGC 2968) (Yeast)).